The following is a 126-amino-acid chain: MIYWIFLALAITAEVIGTLSMKYATVNGQITGHIVMYIMITASYILLSLAIKRVALGVAYALWEGIGILFITLFSVMWFDEPFSLTKLAGLAILVIGIVMLKSGTRKAQGDSGLKARQKERHHATV.

Transmembrane regions (helical) follow at residues 1–21 (MIYW…TLSM), 30–50 (ITGH…LSLA), 54–74 (VALG…ITLF), and 81–101 (EPFS…IVML).

This sequence belongs to the drug/metabolite transporter (DMT) superfamily. Small multidrug resistance (SMR) (TC 2.A.7.1) family. MdtJ subfamily. Forms a complex with MdtI.

It is found in the cell inner membrane. In terms of biological role, catalyzes the excretion of spermidine. The sequence is that of Spermidine export protein MdtJ from Sodalis glossinidius (strain morsitans).